A 502-amino-acid polypeptide reads, in one-letter code: ATP synthase subunit alpha (502 aa).

Positions 115–137 (VDGLGPVETTETRPIESPAPGVM) are disordered. 169 to 176 (GDRQTGKT) contacts ATP.

Belongs to the ATPase alpha/beta chains family. In terms of assembly, F-type ATPases have 2 components, CF(1) - the catalytic core - and CF(0) - the membrane proton channel. CF(1) has five subunits: alpha(3), beta(3), gamma(1), delta(1), epsilon(1). CF(0) has three main subunits: a(1), b(2) and c(9-12). The alpha and beta chains form an alternating ring which encloses part of the gamma chain. CF(1) is attached to CF(0) by a central stalk formed by the gamma and epsilon chains, while a peripheral stalk is formed by the delta and b chains.

It localises to the cell membrane. It carries out the reaction ATP + H2O + 4 H(+)(in) = ADP + phosphate + 5 H(+)(out). Functionally, produces ATP from ADP in the presence of a proton gradient across the membrane. The alpha chain is a regulatory subunit. In Geobacillus kaustophilus (strain HTA426), this protein is ATP synthase subunit alpha.